We begin with the raw amino-acid sequence, 201 residues long: MDATVKKMSPETSRPSREEAENAVRTLLRWAGDDPSREGLLDTPKRVAKAYGELFGGYNVNVEDVLGTTFEEVGGYNDIVLVRDIPFFSHCEHHMLPVIGKAHVAYLPNGRVLGLSKIARVVDLFARRLQTQETMTAQIADSLVQYLQPRGVAVMVDAEHMCMAMRGIQKSGSTTLTTTFTGEFKTDVPQQVRFMTMVQNR.

The segment at 1–20 (MDATVKKMSPETSRPSREEA) is disordered. Zn(2+)-binding residues include Cys91, His94, and Cys162.

This sequence belongs to the GTP cyclohydrolase I family. In terms of assembly, homomer.

It catalyses the reaction GTP + H2O = 7,8-dihydroneopterin 3'-triphosphate + formate + H(+). The protein operates within cofactor biosynthesis; 7,8-dihydroneopterin triphosphate biosynthesis; 7,8-dihydroneopterin triphosphate from GTP: step 1/1. This Allorhizobium ampelinum (strain ATCC BAA-846 / DSM 112012 / S4) (Agrobacterium vitis (strain S4)) protein is GTP cyclohydrolase 1.